The following is a 69-amino-acid chain: Mu-conotoxin-like Am3.1 (69 aa).

The first 20 residues, 1–20 (MMSKLRVLLIICLLLFPLTA), serve as a signal peptide directing secretion. Positions 21–52 (VPLDGDQPADRPAERTQDDISSEHHPMFDAVR) are excised as a propeptide. The segment at 22-43 (PLDGDQPADRPAERTQDDISSE) is disordered. Positions 28–43 (PADRPAERTQDDISSE) are enriched in basic and acidic residues. Pro-66 is subject to 4-hydroxyproline; partial; in minor form. At Cys-68 the chain carries Cysteine amide.

The protein belongs to the conotoxin M family. Post-translationally, mostly non-hydroxylated. Contains 3 disulfide bonds. Expressed by the venom duct.

It localises to the secreted. Mu-conotoxins block voltage-gated sodium channels (Nav). This chain is Mu-conotoxin-like Am3.1, found in Conus amadis (Amadis cone).